We begin with the raw amino-acid sequence, 129 residues long: uncharacterized protein (129 aa).

2 helical membrane-spanning segments follow: residues 35-55 and 98-118; these read IVDGAFGPVSLLFWLLGWKIP and ILLLNALCFRVKILLCAIILL.

It is found in the membrane. This is an uncharacterized protein from Saccharomyces cerevisiae (strain ATCC 204508 / S288c) (Baker's yeast).